A 224-amino-acid polypeptide reads, in one-letter code: UPF0758 protein PSPTO_0086 (224 aa).

The MPN domain occupies 102–224; the sequence is ALENPAQVRN…PLSMVEKGLM (123 aa). Residues histidine 173, histidine 175, and aspartate 186 each contribute to the Zn(2+) site. The JAMM motif signature appears at 173–186; the sequence is HNHPSGITTPSRSD.

This sequence belongs to the UPF0758 family.

This is UPF0758 protein PSPTO_0086 from Pseudomonas syringae pv. tomato (strain ATCC BAA-871 / DC3000).